The primary structure comprises 100 residues: Urease subunit gamma (100 aa).

Belongs to the urease gamma subunit family. In terms of assembly, heterotrimer of UreA (gamma), UreB (beta) and UreC (alpha) subunits. Three heterotrimers associate to form the active enzyme.

The protein localises to the cytoplasm. The enzyme catalyses urea + 2 H2O + H(+) = hydrogencarbonate + 2 NH4(+). It functions in the pathway nitrogen metabolism; urea degradation; CO(2) and NH(3) from urea (urease route): step 1/1. This is Urease subunit gamma from Paracidovorax citrulli (strain AAC00-1) (Acidovorax citrulli).